The chain runs to 600 residues: Aspartate--tRNA(Asp/Asn) ligase (600 aa).

Glu176 is an L-aspartate binding site. The tract at residues 200–203 (QQFK) is aspartate. L-aspartate-binding residues include Arg222 and His452. Residue 222–224 (RDE) coordinates ATP. Position 490 (Glu490) interacts with ATP. Position 497 (Arg497) interacts with L-aspartate. 542-545 (GIDR) lines the ATP pocket.

This sequence belongs to the class-II aminoacyl-tRNA synthetase family. Type 1 subfamily. Homodimer.

The protein localises to the cytoplasm. It catalyses the reaction tRNA(Asx) + L-aspartate + ATP = L-aspartyl-tRNA(Asx) + AMP + diphosphate. Its function is as follows. Aspartyl-tRNA synthetase with relaxed tRNA specificity since it is able to aspartylate not only its cognate tRNA(Asp) but also tRNA(Asn). Reaction proceeds in two steps: L-aspartate is first activated by ATP to form Asp-AMP and then transferred to the acceptor end of tRNA(Asp/Asn). In Rickettsia felis (strain ATCC VR-1525 / URRWXCal2) (Rickettsia azadi), this protein is Aspartate--tRNA(Asp/Asn) ligase.